The chain runs to 412 residues: Alpha-2,8-sialyltransferase 8E (412 aa).

The Cytoplasmic portion of the chain corresponds to 1–16 (MRYADPSANRDLLGNR). A helical; Signal-anchor for type II membrane protein membrane pass occupies residues 17–37 (TLLFIFICAFALVTLLQQILY). The Lumenal portion of the chain corresponds to 38 to 412 (SKSYIKRGFQ…RVHTGTCNCC (375 aa)). N58, N64, N73, and N92 each carry an N-linked (GlcNAc...) asparagine glycan. 2 disulfide bridges follow: C200/C349 and C214/C409. Substrate is bound by residues N228 and 250–252 (NPS). The N-linked (GlcNAc...) asparagine glycan is linked to N277. 336-338 (STG) is a binding site for substrate. H384 functions as the Proton donor/acceptor in the catalytic mechanism.

This sequence belongs to the glycosyltransferase 29 family. Highly expressed in brain. Expressed at low levels in other tissues, including liver, testis, lung, placenta and spleen.

It localises to the golgi apparatus membrane. The enzyme catalyses a ganglioside GT1b (d18:1(4E)) + CMP-N-acetyl-beta-neuraminate = a ganglioside GQ1b (d18:1(4E)) + CMP + H(+). The catalysed reaction is a ganglioside GD3 (d18:1(4E)) + CMP-N-acetyl-beta-neuraminate = a ganglioside GT3 (d18:1(4E)) + CMP + H(+). It catalyses the reaction a ganglioside GD1a (d18:1(4E)) + CMP-N-acetyl-beta-neuraminate = a ganglioside GT1a (d18:1(4E)) + CMP + H(+). It carries out the reaction a ganglioside GM1b (d18:1(4E)) + CMP-N-acetyl-beta-neuraminate = a ganglioside GD1c (d18:1(4E)) + CMP + H(+). The enzyme catalyses a ganglioside GQ1c (d18:1(4E)) + CMP-N-acetyl-beta-neuraminate = a ganglioside GP1c (d18:1(4E)) + CMP + H(+). Its pathway is protein modification; protein glycosylation. Functionally, involved in the synthesis of gangliosides GD1c, GT1a, GQ1b, GP1c and GT3 from GD1a, GT1b, GM1b and GD3 respectively. The polypeptide is Alpha-2,8-sialyltransferase 8E (Mus musculus (Mouse)).